Here is a 406-residue protein sequence, read N- to C-terminus: Probable tRNA sulfurtransferase (406 aa).

The THUMP domain maps to 60 to 166 (EPVMERLKQV…LNGIYLTSAK (107 aa)). Residues 184–185 (ML), 209–210 (HF), Arg-266, Gly-288, and Gln-297 contribute to the ATP site.

This sequence belongs to the ThiI family.

The protein localises to the cytoplasm. The catalysed reaction is [ThiI sulfur-carrier protein]-S-sulfanyl-L-cysteine + a uridine in tRNA + 2 reduced [2Fe-2S]-[ferredoxin] + ATP + H(+) = [ThiI sulfur-carrier protein]-L-cysteine + a 4-thiouridine in tRNA + 2 oxidized [2Fe-2S]-[ferredoxin] + AMP + diphosphate. The enzyme catalyses [ThiS sulfur-carrier protein]-C-terminal Gly-Gly-AMP + S-sulfanyl-L-cysteinyl-[cysteine desulfurase] + AH2 = [ThiS sulfur-carrier protein]-C-terminal-Gly-aminoethanethioate + L-cysteinyl-[cysteine desulfurase] + A + AMP + 2 H(+). It functions in the pathway cofactor biosynthesis; thiamine diphosphate biosynthesis. Functionally, catalyzes the ATP-dependent transfer of a sulfur to tRNA to produce 4-thiouridine in position 8 of tRNAs, which functions as a near-UV photosensor. Also catalyzes the transfer of sulfur to the sulfur carrier protein ThiS, forming ThiS-thiocarboxylate. This is a step in the synthesis of thiazole, in the thiamine biosynthesis pathway. The sulfur is donated as persulfide by IscS. The protein is Probable tRNA sulfurtransferase of Limosilactobacillus fermentum (strain NBRC 3956 / LMG 18251) (Lactobacillus fermentum).